Reading from the N-terminus, the 482-residue chain is MAAPEKMTFPEKPSHKKYRAALKKEKRKKRRQELARLRDSGLSQKEEEEDTFIEEQQLEEEKLLERERQRLHEEWLLREQKAQEEFRIKKEKEEAAKKRQEEQERKLKEQWEEQQRKEREEEEQKRQEKKEKEEALQKMLDQAENELENGTTWQNPEPPVDFRVMEKDRANCPFYSKTGACRFGDRCSRKHNFPTSSPTLLIKSMFTTFGMEQCRRDDYDPDASLEYSEEETYQQFLDFYEDVLPEFKNVGKVIQFKVSCNLEPHLRGNVYVQYQSEEECQAALSLFNGRWYAGRQLQCEFCPVTRWKMAICGLFEIQQCPRGKHCNFLHVFRNPNNEFWEANRDIYLSPDRTGSSFGKNSERRERMGHHDDYYSRLRGRRNPSPDHSYKRNGESERKSSRHRGKKSHKRTSKSRERHNSRSRGRNRDRSRDRSRGRGSRSRSRSRSRRSRRSRSQSSSRSRSRGRRRSGNRDRTVQSPKSK.

A disordered region spans residues 1 to 59 (MAAPEKMTFPEKPSHKKYRAALKKEKRKKRRQELARLRDSGLSQKEEEEDTFIEEQQLE). Basic residues predominate over residues 14–31 (SHKKYRAALKKEKRKKRR). Lys-45 is covalently cross-linked (Glycyl lysine isopeptide (Lys-Gly) (interchain with G-Cter in SUMO2)). Residues 46 to 58 (EEEEDTFIEEQQL) are compositionally biased toward acidic residues. A Glycyl lysine isopeptide (Lys-Gly) (interchain with G-Cter in SUMO2) cross-link involves residue Lys-62. The interval 115–135 (QRKEREEEEQKRQEKKEKEEA) is disordered. The C3H1-type 1 zinc finger occupies 166–194 (EKDRANCPFYSKTGACRFGDRCSRKHNFP). The RRM domain maps to 198-304 (PTLLIKSMFT…RQLQCEFCPV (107 aa)). A C3H1-type 2 zinc finger spans residues 306-333 (RWKMAICGLFEIQQCPRGKHCNFLHVFR). At Ser-349 the chain carries Phosphoserine. Residues 351–482 (DRTGSSFGKN…DRTVQSPKSK (132 aa)) are disordered. Basic and acidic residues-rich tracts occupy residues 360-375 (NSER…DYYS) and 383-398 (PSPD…SERK). Ser-384 carries the post-translational modification Phosphoserine. Residues 399–412 (SSRHRGKKSHKRTS) are compositionally biased toward basic residues. Basic and acidic residues predominate over residues 413-435 (KSRERHNSRSRGRNRDRSRDRSR). A compositionally biased stretch (basic residues) spans 436–454 (GRGSRSRSRSRSRRSRRSR).

In terms of assembly, component of the U11/U12 snRNPs that are part of the U12-type spliceosome. Interacts (via RS domain) with SRSF1 and SRSF2. Interacts with U2AF2/U2AF65. Post-translationally, phosphorylated in the RS domain by SRPK1. Widely expressed.

Its subcellular location is the nucleus. Pre-mRNA-binding protein required for splicing of both U2- and U12-type introns. Selectively interacts with the 3'-splice site of U2- and U12-type pre-mRNAs and promotes different steps in U2 and U12 intron splicing. Recruited to U12 pre-mRNAs in an ATP-dependent manner and is required for assembly of the pre-spliceosome, a precursor to other spliceosomal complexes. For U2-type introns, it is selectively and specifically required for the second step of splicing. The protein is U2 small nuclear ribonucleoprotein auxiliary factor 35 kDa subunit-related protein 2 (ZRSR2) of Homo sapiens (Human).